The chain runs to 236 residues: Phosphoribosylaminoimidazole-succinocarboxamide synthase (236 aa).

Belongs to the SAICAR synthetase family.

The enzyme catalyses 5-amino-1-(5-phospho-D-ribosyl)imidazole-4-carboxylate + L-aspartate + ATP = (2S)-2-[5-amino-1-(5-phospho-beta-D-ribosyl)imidazole-4-carboxamido]succinate + ADP + phosphate + 2 H(+). Its pathway is purine metabolism; IMP biosynthesis via de novo pathway; 5-amino-1-(5-phospho-D-ribosyl)imidazole-4-carboxamide from 5-amino-1-(5-phospho-D-ribosyl)imidazole-4-carboxylate: step 1/2. This chain is Phosphoribosylaminoimidazole-succinocarboxamide synthase, found in Rickettsia bellii (strain OSU 85-389).